The chain runs to 540 residues: Ubiquitin carboxyl-terminal hydrolase 17-like protein E (540 aa).

The disordered stretch occupies residues 1 to 22 (MVVSLSFPEETGGENLPSAPLE). A USP domain is found at 85-382 (CGLQNTGNSC…NAYVLFYVQQ (298 aa)). The active-site Nucleophile is Cys-94. His-341 functions as the Proton acceptor in the catalytic mechanism. 2 stretches are compositionally biased toward basic and acidic residues: residues 431 to 441 (NREKRAKKETS) and 508 to 520 (APDK…HNGD). 2 disordered regions span residues 431–461 (NREK…QKHG) and 499–540 (RSTA…QGGR). The span at 523–540 (LTSQGLMSPGQLCSQGGR) shows a compositional bias: polar residues.

This sequence belongs to the peptidase C19 family. USP17 subfamily. As to quaternary structure, interacts with SUDS3; the interaction is direct.

It is found in the nucleus. The protein resides in the endoplasmic reticulum. It carries out the reaction Thiol-dependent hydrolysis of ester, thioester, amide, peptide and isopeptide bonds formed by the C-terminal Gly of ubiquitin (a 76-residue protein attached to proteins as an intracellular targeting signal).. Its function is as follows. Deubiquitinating enzyme that removes conjugated ubiquitin from specific proteins to regulate different cellular processes that may include cell proliferation, progression through the cell cycle, apoptosis, cell migration, and the cellular response to viral infection. This is Ubiquitin carboxyl-terminal hydrolase 17-like protein E (Usp17le) from Mus musculus (Mouse).